A 358-amino-acid chain; its full sequence is CX3C chemokine receptor 1 (358 aa).

The Extracellular portion of the chain corresponds to 1 to 26 (MHTTLPESTSENFEYYDLAEACDMGD). Residues 27–47 (IVALGTVFVVILYSLVFAFGL) traverse the membrane as a helical segment. The Cytoplasmic segment spans residues 48–68 (VGNLLVVFALINSQRSKSITD). The helical transmembrane segment at 69–89 (IYLLNLALSDLLFVATLPFWT) threads the bilayer. Over 90 to 105 (HYVINEQGLHHATCKL) the chain is Extracellular. A disulfide bridge links Cys-103 with Cys-176. The chain crosses the membrane as a helical span at residues 106–126 (ITAFFFIGFFGGIFFITVISV). Over 127–147 (DRFLAIVLAANSMSNRTVQHG) the chain is Cytoplasmic. Residues 148-168 (VTTSLGVWAAAILVATPQFMF) traverse the membrane as a helical segment. Over 169–186 (TREKENECFGDYPEILQE) the chain is Extracellular. The chain crosses the membrane as a helical span at residues 187 to 207 (IWPVILNTEINFLGFLLPLLI). Topologically, residues 208–232 (MSYCYFRIMQTLFSCKNHKKAKAIR) are cytoplasmic. The helical transmembrane segment at 233–253 (LIFLVVVVFFLFWTPYNVMIF) threads the bilayer. Over 254–275 (LQTLNLYDFFPKCDVKRDLKLA) the chain is Extracellular. A helical transmembrane segment spans residues 276-296 (ISVTETIAFSHCCLNPLIYAF). Over 297–358 (AGEKFRRYLY…TSDGDASILL (62 aa)) the chain is Cytoplasmic. Thr-349 carries the phosphothreonine modification.

This sequence belongs to the G-protein coupled receptor 1 family. Found in a ternary complex with CX3CL1 and ITGAV:ITGB3 or ITGA4:ITGB1. This protein is not N-glycosylated which is unusual for G-protein-coupled receptors.

It is found in the cell membrane. Receptor for the C-X3-C chemokine fractalkine (CX3CL1) present on many early leukocyte cells; CX3CR1-CX3CL1 signaling exerts distinct functions in different tissue compartments, such as immune response, inflammation, cell adhesion and chemotaxis. CX3CR1-CX3CL1 signaling mediates cell migratory functions. Responsible for the recruitment of natural killer (NK) cells to inflamed tissues. Acts as a regulator of inflammation process leading to atherogenesis by mediating macrophage and monocyte recruitment to inflamed atherosclerotic plaques, promoting cell survival. Involved in airway inflammation by promoting interleukin 2-producing T helper (Th2) cell survival in inflamed lung. Involved in the migration of circulating monocytes to non-inflamed tissues, where they differentiate into macrophages and dendritic cells. Acts as a negative regulator of angiogenesis, probably by promoting macrophage chemotaxis. Plays a key role in brain microglia by regulating inflammatory response in the central nervous system (CNS) and regulating synapse maturation. Required to restrain the microglial inflammatory response in the CNS and the resulting parenchymal damage in response to pathological stimuli. Involved in brain development by participating in synaptic pruning, a natural process during which brain microglia eliminates extra synapses during postnatal development. Synaptic pruning by microglia is required to promote the maturation of circuit connectivity during brain development. Acts as an important regulator of the gut microbiota by controlling immunity to intestinal bacteria and fungi. Expressed in lamina propria dendritic cells in the small intestine, which form transepithelial dendrites capable of taking up bacteria in order to provide defense against pathogenic bacteria. Required to initiate innate and adaptive immune responses against dissemination of commensal fungi (mycobiota) component of the gut: expressed in mononuclear phagocytes (MNPs) and acts by promoting induction of antifungal IgG antibodies response to confer protection against disseminated C.albicans or C.auris infection. Also acts as a receptor for C-C motif chemokine CCL26, inducing cell chemotaxis. The chain is CX3C chemokine receptor 1 from Bos taurus (Bovine).